The chain runs to 1178 residues: Dual specificity mitogen-activated protein kinase kinase hemipterous (1178 aa).

Disordered regions lie at residues 74 to 103 (SGSG…SSSS) and 115 to 148 (ATGT…GGGL). Low complexity-rich tracts occupy residues 91-103 (ATPF…SSSS) and 115-128 (ATGT…PPTT). A Protein kinase domain is found at 197–456 (LKHLGDLGNG…YPELLAQPFI (260 aa)). ATP is bound by residues 203-211 (LGNGTSGNV) and Lys-226. Asp-320 acts as the Proton acceptor in catalysis. At Ser-348 the chain carries Phosphoserine. Thr-352 bears the Phosphothreonine mark. A disordered region spans residues 522 to 648 (TYAGQSPTNP…DESPKKESMF (127 aa)). A compositionally biased stretch (polar residues) spans 523 to 543 (YAGQSPTNPQKTIKPTQIPSY). Over residues 544–570 (QQQQSQFFMQSATQLPQTTTTTPTATT) the composition is skewed to low complexity. Residues 574 to 593 (GGSGNGNGRGNGSGGSGNGS) show a composition bias toward gly residues. Positions 594-608 (GSSSSASPLSPPSAG) are enriched in low complexity. Basic and acidic residues predominate over residues 636-646 (KYNDESPKKES). Phosphoserine is present on residues Ser-646 and Ser-662. Disordered stretches follow at residues 715–783 (TTTP…LQPG), 797–851 (QNQL…STCS), 912–933 (GTSP…GNGN), 999–1026 (TSPV…VVNN), 1042–1108 (SSSS…NRGQ), and 1122–1178 (GQPP…TIDQ). The span at 724 to 734 (TENSQAYDSCD) shows a compositional bias: polar residues. Composition is skewed to low complexity over residues 735 to 783 (SSSN…LQPG), 808 to 817 (RYQQQRQQPP), and 837 to 851 (THST…STCS). Polar residues predominate over residues 912 to 928 (GTSPTLQSRSPEQQSDY). Positions 1042–1055 (SSSSNTSQSTSPTT) are enriched in low complexity. Phosphoserine is present on residues Ser-1150 and Ser-1154. Over residues 1168–1178 (PQRRIYRTIDQ) the composition is skewed to basic and acidic residues.

Belongs to the protein kinase superfamily. STE Ser/Thr protein kinase family. MAP kinase kinase subfamily. Post-translationally, MAPKK is itself dependent on Ser/Thr phosphorylation for activity catalyzed by MAP kinase kinase kinases. In terms of processing, weakly autophosphorylated.

The catalysed reaction is L-seryl-[protein] + ATP = O-phospho-L-seryl-[protein] + ADP + H(+). It catalyses the reaction L-threonyl-[protein] + ATP = O-phospho-L-threonyl-[protein] + ADP + H(+). It carries out the reaction L-tyrosyl-[protein] + ATP = O-phospho-L-tyrosyl-[protein] + ADP + H(+). Functionally, required for the epithelial cell sheet movement called dorsal closure (DC), which allows establishment of the dorsal epidermis. Controls the expression in the dorsal epithelium edges of another dorsal closure gene, puckered (puc). Phosphorylates and activates the MAP kinase bsk; bsk signal transduction pathway mediates an immune response and morphogenesis. This chain is Dual specificity mitogen-activated protein kinase kinase hemipterous (hep), found in Drosophila melanogaster (Fruit fly).